The primary structure comprises 37 residues: Large ribosomal subunit protein bL36c (37 aa).

This sequence belongs to the bacterial ribosomal protein bL36 family.

The protein localises to the plastid. Its subcellular location is the chloroplast. This Dioscorea elephantipes (Elephant's foot yam) protein is Large ribosomal subunit protein bL36c.